The chain runs to 319 residues: Cytochrome c biogenesis protein CcsA (319 aa).

Helical transmembrane passes span 14-34 (AFAV…FPQW), 46-66 (AIAN…GGYF), 74-94 (SLFF…SISG), 97-117 (LVGV…ALSL), and 142-162 (VMML…ALLV). Residues 175 to 201 (SVGTGSFRSRRPEPSLEASTGNGGTTV) form a disordered region. Residues 191-201 (EASTGNGGTTV) show a composition bias toward polar residues. The next 3 helical transmembrane spans lie at 227–247 (MIGL…VWAN), 254–274 (WSWD…AAYL), and 288–308 (AILA…VNLL).

The protein belongs to the CcmF/CycK/Ccl1/NrfE/CcsA family. As to quaternary structure, may interact with ccs1.

It localises to the cellular thylakoid membrane. Required during biogenesis of c-type cytochromes (cytochrome c6 and cytochrome f) at the step of heme attachment. This is Cytochrome c biogenesis protein CcsA from Thermosynechococcus vestitus (strain NIES-2133 / IAM M-273 / BP-1).